Consider the following 31-residue polypeptide: Cytochrome b6-f complex subunit 8 (31 aa).

The chain crosses the membrane as a helical span at residues 5-25; it reads IVSLAWAALMVVFTFSLSLVV.

It belongs to the PetN family. As to quaternary structure, the 4 large subunits of the cytochrome b6-f complex are cytochrome b6, subunit IV (17 kDa polypeptide, PetD), cytochrome f and the Rieske protein, while the 4 small subunits are PetG, PetL, PetM and PetN. The complex functions as a dimer.

It is found in the plastid. The protein resides in the chloroplast thylakoid membrane. In terms of biological role, component of the cytochrome b6-f complex, which mediates electron transfer between photosystem II (PSII) and photosystem I (PSI), cyclic electron flow around PSI, and state transitions. This chain is Cytochrome b6-f complex subunit 8, found in Acorus calamus (Sweet flag).